A 216-amino-acid polypeptide reads, in one-letter code: Thiamine-phosphate synthase (216 aa).

4-amino-2-methyl-5-(diphosphooxymethyl)pyrimidine contacts are provided by residues 40–44 and asparagine 72; that span reads QLRIK. 2 residues coordinate Mg(2+): aspartate 73 and aspartate 92. Serine 111 serves as a coordination point for 4-amino-2-methyl-5-(diphosphooxymethyl)pyrimidine. A 2-[(2R,5Z)-2-carboxy-4-methylthiazol-5(2H)-ylidene]ethyl phosphate-binding site is contributed by 137–139; that stretch reads TTT. Lysine 140 serves as a coordination point for 4-amino-2-methyl-5-(diphosphooxymethyl)pyrimidine. 2-[(2R,5Z)-2-carboxy-4-methylthiazol-5(2H)-ylidene]ethyl phosphate-binding positions include glycine 169 and 189-190; that span reads VS.

Belongs to the thiamine-phosphate synthase family. Requires Mg(2+) as cofactor.

The enzyme catalyses 2-[(2R,5Z)-2-carboxy-4-methylthiazol-5(2H)-ylidene]ethyl phosphate + 4-amino-2-methyl-5-(diphosphooxymethyl)pyrimidine + 2 H(+) = thiamine phosphate + CO2 + diphosphate. The catalysed reaction is 2-(2-carboxy-4-methylthiazol-5-yl)ethyl phosphate + 4-amino-2-methyl-5-(diphosphooxymethyl)pyrimidine + 2 H(+) = thiamine phosphate + CO2 + diphosphate. It carries out the reaction 4-methyl-5-(2-phosphooxyethyl)-thiazole + 4-amino-2-methyl-5-(diphosphooxymethyl)pyrimidine + H(+) = thiamine phosphate + diphosphate. Its pathway is cofactor biosynthesis; thiamine diphosphate biosynthesis; thiamine phosphate from 4-amino-2-methyl-5-diphosphomethylpyrimidine and 4-methyl-5-(2-phosphoethyl)-thiazole: step 1/1. In terms of biological role, condenses 4-methyl-5-(beta-hydroxyethyl)thiazole monophosphate (THZ-P) and 2-methyl-4-amino-5-hydroxymethyl pyrimidine pyrophosphate (HMP-PP) to form thiamine monophosphate (TMP). The protein is Thiamine-phosphate synthase of Photorhabdus laumondii subsp. laumondii (strain DSM 15139 / CIP 105565 / TT01) (Photorhabdus luminescens subsp. laumondii).